The following is a 149-amino-acid chain: 3-dehydroquinate dehydratase (149 aa).

The Proton acceptor role is filled by Tyr26. Substrate contacts are provided by Asn77, His83, and Asp90. The Proton donor role is filled by His103. Residues Leu104–Ser105 and Arg114 contribute to the substrate site.

The protein belongs to the type-II 3-dehydroquinase family. Homododecamer.

It carries out the reaction 3-dehydroquinate = 3-dehydroshikimate + H2O. The protein operates within metabolic intermediate biosynthesis; chorismate biosynthesis; chorismate from D-erythrose 4-phosphate and phosphoenolpyruvate: step 3/7. In terms of biological role, catalyzes a trans-dehydration via an enolate intermediate. The sequence is that of 3-dehydroquinate dehydratase from Haemophilus influenzae (strain 86-028NP).